Consider the following 662-residue polypeptide: Chromosomal replication initiator protein DnaA (662 aa).

The tract at residues 1-93 (MDDEQNVLAT…QVEGLGVRIA (93 aa)) is domain I, interacts with DnaA modulators. Positions 93–322 (AAPATPTAER…STPAPANSSA (230 aa)) are domain II. Over residues 96-105 (ATPTAERAAA) the composition is skewed to low complexity. Residues 96-294 (ATPTAERAAA…SDGPVERDDE (199 aa)) are disordered. Basic and acidic residues predominate over residues 114 to 123 (SRPERPRGER). Low complexity predominate over residues 166 to 199 (PPAAEYTPAAEYTPAAEYTPAAEYSPEPEYTPAT). Basic and acidic residues-rich tracts occupy residues 236-248 (TPRR…RRDA) and 261-290 (PGDR…GPVE). Positions 323 to 539 (SLNAKYTFET…GALIRVTAFA (217 aa)) are domain III, AAA+ region. ATP is bound by residues G367, G369, K370, and T371. The segment at 540 to 662 (SLNGQPLDLS…LTARIKQRSR (123 aa)) is domain IV, binds dsDNA.

This sequence belongs to the DnaA family. As to quaternary structure, oligomerizes as a right-handed, spiral filament on DNA at oriC.

The protein localises to the cytoplasm. Plays an essential role in the initiation and regulation of chromosomal replication. ATP-DnaA binds to the origin of replication (oriC) to initiate formation of the DNA replication initiation complex once per cell cycle. Binds the DnaA box (a 9 base pair repeat at the origin) and separates the double-stranded (ds)DNA. Forms a right-handed helical filament on oriC DNA; dsDNA binds to the exterior of the filament while single-stranded (ss)DNA is stabiized in the filament's interior. The ATP-DnaA-oriC complex binds and stabilizes one strand of the AT-rich DNA unwinding element (DUE), permitting loading of DNA polymerase. After initiation quickly degrades to an ADP-DnaA complex that is not apt for DNA replication. Binds acidic phospholipids. This is Chromosomal replication initiator protein DnaA from Nocardia farcinica (strain IFM 10152).